Here is a 312-residue protein sequence, read N- to C-terminus: Ribosomal protein L11 methyltransferase (312 aa).

S-adenosyl-L-methionine contacts are provided by T159, G180, D201, and N244.

This sequence belongs to the methyltransferase superfamily. PrmA family.

It localises to the cytoplasm. The catalysed reaction is L-lysyl-[protein] + 3 S-adenosyl-L-methionine = N(6),N(6),N(6)-trimethyl-L-lysyl-[protein] + 3 S-adenosyl-L-homocysteine + 3 H(+). Its function is as follows. Methylates ribosomal protein L11. The sequence is that of Ribosomal protein L11 methyltransferase from Desulfitobacterium hafniense (strain DSM 10664 / DCB-2).